Reading from the N-terminus, the 195-residue chain is Cysteine/O-acetylserine efflux protein (195 aa).

Topologically, residues 1 to 9 (MTPMLLSAF) are periplasmic. A helical transmembrane segment spans residues 10 to 32 (WTYTLITALTPGPNNILALSAAT). Topologically, residues 33–46 (AHGFRQSIRVLAGM) are cytoplasmic. A helical transmembrane segment spans residues 47 to 67 (SLGFLVVMLLCAGIAFSLAVI). The Periplasmic portion of the chain corresponds to 68–69 (DP). A helical membrane pass occupies residues 70-90 (AIIHLLSWVGAAYILWLAWKI). Over 91 to 104 (ATSPAADENARPKP) the chain is Cytoplasmic. The chain crosses the membrane as a helical span at residues 105–125 (VGFWVSFGLQFVNVKIILYGI). Topologically, residues 126–141 (TALSTFVLPQTQALNW) are periplasmic. A helical transmembrane segment spans residues 142–162 (VIGVSILLALIGTFGNVCWAL). The Cytoplasmic segment spans residues 163 to 176 (AGHLFQRAFRHYGR). A helical transmembrane segment spans residues 177 to 194 (QLNIILALLLVYCAVRIF). Tyr-195 is a topological domain (periplasmic).

It belongs to the Rht family.

It localises to the cell inner membrane. It catalyses the reaction O-acetyl-L-serine(in) = O-acetyl-L-serine(out). It carries out the reaction L-cysteine(in) = L-cysteine(out). Functionally, exporter of O-acetylserine (OAS) and cysteine. The sequence is that of Cysteine/O-acetylserine efflux protein (eamB) from Salmonella choleraesuis (strain SC-B67).